The following is a 207-amino-acid chain: MTGIPSIVPYALPTNRDLPVNLAQWSIDPERAVLLVHDMQRYFLRPLPDALRDEVVSNAARIRQWAADNGVPVAYTAQPGSMSEEQRGLLKDFWGPGMKASPADREVVGALTPKPGDWLLTKWRYSAFFNSDLLERMRANGRDQLILCGVYAHVGVLISTVDAYSNDIQPFLVADAIADFSKEHHWMAIEYAASRCAMVITTDEVVL.

This sequence belongs to the isochorismatase family.

It catalyses the reaction isochorismate + H2O = (2S,3S)-2,3-dihydroxy-2,3-dihydrobenzoate + pyruvate. Its pathway is antibiotic biosynthesis; phenazine biosynthesis. Functionally, involved in the biosynthesis of the antibiotic phenazine, a nitrogen-containing heterocyclic molecule having important roles in virulence, competition and biological control. This isochorismatase may remove pyruvate from chorismate during the formation of the phenazine ring structure and/or stabilize the phenazine biosynthetic complex. The protein is Probable isochorismatase (phzA) of Pseudomonas chlororaphis (Pseudomonas aureofaciens).